The chain runs to 590 residues: Aspartate--tRNA(Asp/Asn) ligase (590 aa).

Residue glutamate 173 coordinates L-aspartate. The interval 197 to 200 is aspartate; it reads QIFK. Residue arginine 219 participates in L-aspartate binding. ATP contacts are provided by residues 219–221 and glutamine 228; that span reads RDE. L-aspartate is bound at residue histidine 450. Glutamate 484 is an ATP binding site. Arginine 491 serves as a coordination point for L-aspartate. An ATP-binding site is contributed by 536–539; the sequence is GLDR.

The protein belongs to the class-II aminoacyl-tRNA synthetase family. Type 1 subfamily. As to quaternary structure, homodimer.

It localises to the cytoplasm. The catalysed reaction is tRNA(Asx) + L-aspartate + ATP = L-aspartyl-tRNA(Asx) + AMP + diphosphate. In terms of biological role, aspartyl-tRNA synthetase with relaxed tRNA specificity since it is able to aspartylate not only its cognate tRNA(Asp) but also tRNA(Asn). Reaction proceeds in two steps: L-aspartate is first activated by ATP to form Asp-AMP and then transferred to the acceptor end of tRNA(Asp/Asn). The polypeptide is Aspartate--tRNA(Asp/Asn) ligase (Coxiella burnetii (strain RSA 331 / Henzerling II)).